We begin with the raw amino-acid sequence, 366 residues long: DNA-directed RNA polymerase II subunit GRINL1A (366 aa).

The tract at residues 1–23 (MFSLPRGFEPPAPEDLGRQSSAE) is disordered. Residues 15–39 (DLGRQSSAELRERLRRQERLLRNEK) are a coiled coil. Positions 29–68 (RRQERLLRNEKFICKLPDKGKKISDTVAKLKAAISEREEV) are important for transcription repressor activity. Disordered stretches follow at residues 88-140 (ATTR…HRGN), 158-182 (IRARAPSSEVKEHLPQHSVSSQEEE), 201-225 (ADQSEPSEENTSTENFPELQSETPK), and 237-280 (ARNP…RRAR). The span at 90–100 (TRADTDVDKAQ) shows a compositional bias: basic and acidic residues. The span at 101–127 (SSDLMLDTSSLDPDCSSIDIKSSKSTS) shows a compositional bias: low complexity. Residues 225-296 (KKPHYMKVLE…TAARLLPLHH (72 aa)) form an interaction with Pol II region. The span at 251–272 (VLPTQQSDSPSHCQRGQSPASS) shows a compositional bias: polar residues. Residue serine 268 is modified to Phosphoserine. Positions 297 to 312 (LPAQLLSIEESLALQR) are important for transcription repressor activity. The stretch at 299 to 333 (AQLLSIEESLALQREQKQNYEEMQAKLAAQKLAER) forms a coiled coil. Positions 313–338 (EQKQNYEEMQAKLAAQKLAERLNIKM) are interaction with Pol II. The tract at residues 338–366 (MQSYNPEGESSGRYREVRDEADAQSSDEC) is disordered. Basic and acidic residues predominate over residues 347–358 (SSGRYREVRDEA).

This sequence belongs to the GRINL1 family. As to quaternary structure, component of the Pol II(G) complex, which contains the RNA polymerase II (Pol II) core complex subunits and POLR2M isoform 1. Pol II(G) appears to be an abundant form of Pol II. Post-translationally, dephosphorylated at Ser-268 by the PNUTS-PP1 complex, promoting RNA polymerase II transcription pause-release.

The protein resides in the nucleus. Its function is as follows. Appears to be a stable component of the Pol II(G) complex form of RNA polymerase II (Pol II). Pol II synthesizes mRNA precursors and many functional non-coding RNAs and is the central component of the basal RNA polymerase II transcription machinery. May play a role in the Mediator complex-dependent regulation of transcription activation. Acts as a negative regulator of transcriptional activation; this repression is relieved by the Mediator complex, which restores Pol II(G) activator-dependent transcription to a level equivalent to that of Pol II. This chain is DNA-directed RNA polymerase II subunit GRINL1A (Polr2m), found in Mus musculus (Mouse).